The following is a 182-amino-acid chain: Ribosome-recycling factor (182 aa).

This sequence belongs to the RRF family.

It is found in the cytoplasm. Functionally, responsible for the release of ribosomes from messenger RNA at the termination of protein biosynthesis. May increase the efficiency of translation by recycling ribosomes from one round of translation to another. This chain is Ribosome-recycling factor, found in Nostoc punctiforme (strain ATCC 29133 / PCC 73102).